Consider the following 299-residue polypeptide: MLKIGSHVSMSGKKMLLAASEEAASYGANTFMIYTGAPQNTKRKSIEELNIEAGRQHMQAHGIEEIVVHAPYIINIGNTTNLDTFSLGVDFLRAEIERTEAIGAKQLVLHPGAHVGAGVEAGLRQIIRGLNEVLTREQNVQIALETMAGKGSECGRTFEELAYIIDGVAYNDKLSVCFDTCHTHDAGYDIVNDFDGVLEEFDRIIGLGRLKVLHINDSKNPRGSRKDRHENIGFGHIGFAALNYIVHHPQLEDIPKILETPYVGEDKNNKKPPYKHEIAMLRAQSFDDQLLEKINAGAE.

His69, His110, Glu145, Asp179, His182, His214, Asp227, His229, and Glu259 together coordinate Zn(2+).

Belongs to the AP endonuclease 2 family. It depends on Zn(2+) as a cofactor.

The catalysed reaction is Endonucleolytic cleavage to 5'-phosphooligonucleotide end-products.. Its function is as follows. Endonuclease IV plays a role in DNA repair. It cleaves phosphodiester bonds at apurinic or apyrimidinic (AP) sites, generating a 3'-hydroxyl group and a 5'-terminal sugar phosphate. In Geobacillus kaustophilus (strain HTA426), this protein is Probable endonuclease 4.